The following is a 292-amino-acid chain: Putative pyruvate, phosphate dikinase regulatory protein (292 aa).

Residue 155–162 (GVSRSSKT) participates in ADP binding.

This sequence belongs to the pyruvate, phosphate/water dikinase regulatory protein family. PDRP subfamily.

It carries out the reaction N(tele)-phospho-L-histidyl/L-threonyl-[pyruvate, phosphate dikinase] + ADP = N(tele)-phospho-L-histidyl/O-phospho-L-threonyl-[pyruvate, phosphate dikinase] + AMP + H(+). The enzyme catalyses N(tele)-phospho-L-histidyl/O-phospho-L-threonyl-[pyruvate, phosphate dikinase] + phosphate + H(+) = N(tele)-phospho-L-histidyl/L-threonyl-[pyruvate, phosphate dikinase] + diphosphate. Functionally, bifunctional serine/threonine kinase and phosphorylase involved in the regulation of the pyruvate, phosphate dikinase (PPDK) by catalyzing its phosphorylation/dephosphorylation. The protein is Putative pyruvate, phosphate dikinase regulatory protein of Acidiphilium cryptum (strain JF-5).